The following is a 421-amino-acid chain: SH2 domain-containing protein 4A (421 aa).

Residues Ser117 and Ser123 each carry the phosphoserine modification. The segment at 132–271 (DLQAMKKTEP…FLQPLGIPPK (140 aa)) is disordered. 2 stretches are compositionally biased toward basic and acidic residues: residues 163-201 (TRKD…KEDS) and 211-230 (KAAD…DYKR). Phosphoserine is present on Ser232. Positions 315–407 (WFHGILTLKK…LGKELLLYPC (93 aa)) constitute an SH2 domain.

Interacts with ESR1. As to expression, in the kidney, expressed only in the glomerulus. Expressed in T-cells, B-cells, macrophages and dendritic cells (at protein level). In adult, highest levels are found in muscle and lung with lower levels in kidney.

It localises to the cytoplasm. Inhibits estrogen-induced cell proliferation by competing with PLCG for binding to ESR1, blocking the effect of estrogen on PLCG and repressing estrogen-induced proliferation. May play a role in T-cell development and function. This chain is SH2 domain-containing protein 4A (Sh2d4a), found in Mus musculus (Mouse).